A 323-amino-acid chain; its full sequence is Protein MEI2-like 6 (323 aa).

The sequence is that of Protein MEI2-like 6 (ML6) from Oryza sativa subsp. japonica (Rice).